We begin with the raw amino-acid sequence, 144 residues long: 3-dehydroquinate dehydratase (144 aa).

Tyr-22 functions as the Proton acceptor in the catalytic mechanism. 3 residues coordinate substrate: Asn-73, His-79, and Asp-86. His-99 (proton donor) is an active-site residue. Substrate-binding positions include 100–101 and Arg-110; that span reads LS.

It belongs to the type-II 3-dehydroquinase family. As to quaternary structure, homododecamer.

It carries out the reaction 3-dehydroquinate = 3-dehydroshikimate + H2O. Its pathway is metabolic intermediate biosynthesis; chorismate biosynthesis; chorismate from D-erythrose 4-phosphate and phosphoenolpyruvate: step 3/7. Its function is as follows. Catalyzes a trans-dehydration via an enolate intermediate. The chain is 3-dehydroquinate dehydratase from Pelotomaculum thermopropionicum (strain DSM 13744 / JCM 10971 / SI).